We begin with the raw amino-acid sequence, 398 residues long: Dual-specificity RNA methyltransferase RlmN (398 aa).

Glutamate 119 serves as the catalytic Proton acceptor. The 240-residue stretch at 125 to 364 folds into the Radical SAM core domain; sequence EEERATLCVS…TIVRKTRGDD (240 aa). Cysteine 132 and cysteine 369 are disulfide-bonded. [4Fe-4S] cluster is bound by residues cysteine 139, cysteine 143, and cysteine 146. Residues 193-194, serine 225, 247-249, and asparagine 326 each bind S-adenosyl-L-methionine; these read GE and SLH. Catalysis depends on cysteine 369, which acts as the S-methylcysteine intermediate.

The protein belongs to the radical SAM superfamily. RlmN family. It depends on [4Fe-4S] cluster as a cofactor.

The protein resides in the cytoplasm. It carries out the reaction adenosine(2503) in 23S rRNA + 2 reduced [2Fe-2S]-[ferredoxin] + 2 S-adenosyl-L-methionine = 2-methyladenosine(2503) in 23S rRNA + 5'-deoxyadenosine + L-methionine + 2 oxidized [2Fe-2S]-[ferredoxin] + S-adenosyl-L-homocysteine. The catalysed reaction is adenosine(37) in tRNA + 2 reduced [2Fe-2S]-[ferredoxin] + 2 S-adenosyl-L-methionine = 2-methyladenosine(37) in tRNA + 5'-deoxyadenosine + L-methionine + 2 oxidized [2Fe-2S]-[ferredoxin] + S-adenosyl-L-homocysteine. Functionally, specifically methylates position 2 of adenine 2503 in 23S rRNA and position 2 of adenine 37 in tRNAs. m2A2503 modification seems to play a crucial role in the proofreading step occurring at the peptidyl transferase center and thus would serve to optimize ribosomal fidelity. The chain is Dual-specificity RNA methyltransferase RlmN from Pectobacterium atrosepticum (strain SCRI 1043 / ATCC BAA-672) (Erwinia carotovora subsp. atroseptica).